A 361-amino-acid chain; its full sequence is Spermatogenesis-associated protein 17 (361 aa).

IQ domains lie at 32 to 61 (ENDA…IVTI), 55 to 84 (LNRI…VAYY), and 91 to 120 (YNAM…LKEY).

It is found in the cytoplasm. The chain is Spermatogenesis-associated protein 17 (SPATA17) from Homo sapiens (Human).